We begin with the raw amino-acid sequence, 255 residues long: Putative Myb family transcription factor At1g14600 (255 aa).

Residues 20-80 (RSPVPRLRWT…HLQMYRGSRI (61 aa)) enclose the HTH myb-type domain. The H-T-H motif DNA-binding region spans 51–76 (PKLVLKIMDVKGLTISHVKSHLQMYR). The interval 80–110 (ITLLGKPEESSSPSSRRRRRQDNEEDHLHDN) is disordered.

It localises to the nucleus. Its function is as follows. Putative transcription factor. The sequence is that of Putative Myb family transcription factor At1g14600 from Arabidopsis thaliana (Mouse-ear cress).